A 374-amino-acid chain; its full sequence is Glyceraldehyde-3-phosphate dehydrogenase A, chloroplastic (374 aa).

Residues 1-34 (MAAMMQKSAFTGSAVSSKSGVRAKAARAVVDVRA) constitute a chloroplast transit peptide. NADP(+) is bound by residues 47–48 (RI), Asp71, and Arg116. Cys55 and Cys325 are oxidised to a cystine. D-glyceraldehyde 3-phosphate-binding positions include 189 to 191 (SCT), Thr220, Arg235, 248 to 249 (TG), and Arg271. The active-site Nucleophile is Cys190. Asn353 contributes to the NADP(+) binding site.

This sequence belongs to the glyceraldehyde-3-phosphate dehydrogenase family. As to quaternary structure, homotetramer. Component of a complex that contains two dimers of PRK, two tetramers of GAPDH and CP12. CP12 associates with GAPDH, causing its conformation to change. This GAPDH/CP12 complex binds PRK to form a half-complex (one unit). This unit probably dimerizes due partially to interactions between the enzymes of each unit.

The protein localises to the plastid. It is found in the chloroplast. It catalyses the reaction D-glyceraldehyde 3-phosphate + phosphate + NADP(+) = (2R)-3-phospho-glyceroyl phosphate + NADPH + H(+). It functions in the pathway carbohydrate biosynthesis; Calvin cycle. The polypeptide is Glyceraldehyde-3-phosphate dehydrogenase A, chloroplastic (GAPA) (Chlamydomonas reinhardtii (Chlamydomonas smithii)).